The sequence spans 488 residues: uncharacterized protein (488 aa).

Belongs to the IIV-6 467R family.

This is an uncharacterized protein from Invertebrate iridescent virus 3 (IIV-3).